The chain runs to 311 residues: Putative mitochondrial transporter UCP3 (311 aa).

Residues 1–10 (MVGLQPSERP) lie on the Mitochondrial intermembrane side of the membrane. The chain crosses the membrane as a helical span at residues 11 to 32 (PTTSVKFLAAGTAACFADLLTF). Solcar repeat units lie at residues 11–105 (PTTS…VKQF), 114–205 (SSII…IKEK), and 214–299 (DNFP…MKRA). The Mitochondrial matrix segment spans residues 33–76 (PLDTAKVRLQIQGENQAALAARSAQYRGVLGTILTMVRTEGPRS). A helical membrane pass occupies residues 77 to 99 (LYSGLVAGLQRQMSFASIRIGLY). At 100–119 (DSVKQFYTPKGSDHSSIITR) the chain is on the mitochondrial intermembrane side. Residues 120–136 (ILAGCTTGAMAVTCAQP) form a helical membrane-spanning segment. The Mitochondrial matrix segment spans residues 137-182 (TDVVKIRFQASMHTGLGGNRKYSGTMDAYRTIAREEGVRGLWKGIL). The helical transmembrane segment at 183–199 (PNITRNAIVNCGEMVTY) threads the bilayer. The Mitochondrial intermembrane segment spans residues 200-216 (DIIKEKLLDYHLLTDNF). Residues 217–236 (PCHFVSAFGAGFCATLVASP) traverse the membrane as a helical segment. At 237-270 (VDVVKTRYMNSPPGQYHSPFDCMLKMVTQEGPTA) the chain is on the mitochondrial matrix side. A helical transmembrane segment spans residues 271 to 293 (FYKGFTPSFLRLGSWNVVMFVTY). The interval 278–300 (SFLRLGSWNVVMFVTYEQMKRAL) is purine nucleotide binding. Residues 294–311 (EQMKRALMKVQMLRDSPF) lie on the Mitochondrial intermembrane side of the membrane.

This sequence belongs to the mitochondrial carrier (TC 2.A.29) family. In terms of assembly, interacts with HAX1; the interaction is direct and calcium-dependent.

Its subcellular location is the mitochondrion inner membrane. Its function is as follows. Putative transmembrane transporter that plays a role in mitochondrial metabolism via an as yet unclear mechanism. Originally, this mitochondrial protein was thought to act as a proton transmembrane transporter from the mitochondrial intermembrane space into the matrix, causing proton leaks through the inner mitochondrial membrane, thereby uncoupling mitochondrial membrane potential generation from ATP synthesis. However, this function is controversial and uncoupling may not be the function, or at least not the main function, but rather a consequence of more conventional metabolite transporter activity. The sequence is that of Putative mitochondrial transporter UCP3 from Bos taurus (Bovine).